The sequence spans 293 residues: Probable endonuclease 4 (293 aa).

Histidine 75, histidine 115, glutamate 153, aspartate 187, histidine 190, histidine 224, aspartate 237, histidine 239, and glutamate 269 together coordinate Zn(2+).

Belongs to the AP endonuclease 2 family. The cofactor is Zn(2+).

It catalyses the reaction Endonucleolytic cleavage to 5'-phosphooligonucleotide end-products.. Functionally, endonuclease IV plays a role in DNA repair. It cleaves phosphodiester bonds at apurinic or apyrimidinic (AP) sites, generating a 3'-hydroxyl group and a 5'-terminal sugar phosphate. In Chlamydia pneumoniae (Chlamydophila pneumoniae), this protein is Probable endonuclease 4.